The sequence spans 663 residues: Oligopeptide-binding protein SarA (663 aa).

The signal sequence occupies residues 1 to 22 (MKKGKILALAGVALLATGVLAA). The N-palmitoyl cysteine moiety is linked to residue C23. Residue C23 is the site of S-diacylglycerol cysteine attachment. Residues 637–663 (QKAQEKWNKERAESNKKAQEELEKHVK) form a disordered region.

It belongs to the bacterial solute-binding protein 5 family.

Its subcellular location is the cell membrane. May be involved in the expression of cell surface properties important for colonization of the human oral cavity. It may also be involved in uptake processes. This is Oligopeptide-binding protein SarA (sarA) from Streptococcus gordonii (strain Challis / ATCC 35105 / BCRC 15272 / CH1 / DL1 / V288).